Here is a 100-residue protein sequence, read N- to C-terminus: Large ribosomal subunit protein uL23 (100 aa).

Belongs to the universal ribosomal protein uL23 family. In terms of assembly, part of the 50S ribosomal subunit. Contacts protein L29, and trigger factor when it is bound to the ribosome.

Functionally, one of the early assembly proteins it binds 23S rRNA. One of the proteins that surrounds the polypeptide exit tunnel on the outside of the ribosome. Forms the main docking site for trigger factor binding to the ribosome. In Kosmotoga olearia (strain ATCC BAA-1733 / DSM 21960 / TBF 19.5.1), this protein is Large ribosomal subunit protein uL23.